Here is a 229-residue protein sequence, read N- to C-terminus: Sugar fermentation stimulation protein homolog (229 aa).

The protein belongs to the SfsA family.

The polypeptide is Sugar fermentation stimulation protein homolog (Caldanaerobacter subterraneus subsp. tengcongensis (strain DSM 15242 / JCM 11007 / NBRC 100824 / MB4) (Thermoanaerobacter tengcongensis)).